The sequence spans 118 residues: Small ribosomal subunit protein uS13 (118 aa).

The interval 93–118 (RNLPVRGQRSKTNARTRKGPRKPIKR) is disordered.

This sequence belongs to the universal ribosomal protein uS13 family. Part of the 30S ribosomal subunit. Forms a loose heterodimer with protein S19. Forms two bridges to the 50S subunit in the 70S ribosome.

Located at the top of the head of the 30S subunit, it contacts several helices of the 16S rRNA. In the 70S ribosome it contacts the 23S rRNA (bridge B1a) and protein L5 of the 50S subunit (bridge B1b), connecting the 2 subunits; these bridges are implicated in subunit movement. Contacts the tRNAs in the A and P-sites. The protein is Small ribosomal subunit protein uS13 of Saccharophagus degradans (strain 2-40 / ATCC 43961 / DSM 17024).